A 586-amino-acid chain; its full sequence is Actin-related protein 9 (586 aa).

The interval 141–169 is disordered; it reads STPIVDKDADVDPLQRSTPDDTEPNSEEN.

Belongs to the actin family. ARP8 subfamily.

In Oryza sativa subsp. indica (Rice), this protein is Actin-related protein 9 (ARP9).